The primary structure comprises 230 residues: Androgen-dependent TFPI-regulating protein (230 aa).

Over 1-7 (MTKTTTC) the chain is Cytoplasmic. A helical membrane pass occupies residues 8–28 (LYHFVVLNWYIFLNYYIPQIG). The Extracellular segment spans residues 29 to 45 (KDEEKLKEFHDGGRSKY). A helical membrane pass occupies residues 46–66 (LTLLNLLLQAVFFGVACLDDV). Residues 67 to 85 (LKRVIGRKDIKFITYFRDL) lie on the Cytoplasmic side of the membrane. A helical membrane pass occupies residues 86-106 (LFTTLAFPLSTFVFLVFWSLF). At 107–120 (HYDRSLVYPKGLDD) the chain is on the extracellular side. A helical membrane pass occupies residues 121-141 (FFPAWVNHAMHTSIFPFSLAE). Residues 142–155 (TVLRPHNYPSKKLG) lie on the Cytoplasmic side of the membrane. Residues 156–173 (LSLLGACNFAYIIRILWR) traverse the membrane as a helical segment. At 174–190 (YVQTGNWVYPVFASLSP) the chain is on the extracellular side. A helical transmembrane segment spans residues 191–211 (LGIILFFSASYILSASLYLFG). The Cytoplasmic segment spans residues 212-230 (EKINHWKWGATVKPRMKKN).

It belongs to the AIG1 family.

It is found in the cell membrane. The enzyme catalyses 9-hexadecanoyloxy-octadecanoate + H2O = 9-hydroxy-octadecanoate + hexadecanoate + H(+). It carries out the reaction 12-hexadecanoyloxy-octadecanoate + H2O = 12-hydroxyoctadecanoate + hexadecanoate + H(+). The catalysed reaction is 9-(9Z-hexadecenoyloxy)-octadecanoate + H2O = (9Z)-hexadecenoate + 9-hydroxy-octadecanoate + H(+). It catalyses the reaction 12-(9Z-hexadecenoyloxy)-octadecanoate + H2O = 12-hydroxyoctadecanoate + (9Z)-hexadecenoate + H(+). The enzyme catalyses 13-(9Z-hexadecenoyloxy)-octadecanoate + H2O = 13-hydroxy-octadecanoate + (9Z)-hexadecenoate + H(+). It carries out the reaction 9-octadecanoyloxy-octadecanoate + H2O = 9-hydroxy-octadecanoate + octadecanoate + H(+). The catalysed reaction is 12-octadecanoyloxy-octadecanoate + H2O = 12-hydroxyoctadecanoate + octadecanoate + H(+). It catalyses the reaction 13-octadecanoyloxy-octadecanoate + H2O = 13-hydroxy-octadecanoate + octadecanoate + H(+). The enzyme catalyses 9-(9Z-octadecenoyloxy)-octadecanoate + H2O = 9-hydroxy-octadecanoate + (9Z)-octadecenoate + H(+). It carries out the reaction 12-(9Z-octadecenoyloxy)-octadecanoate + H2O = 12-hydroxyoctadecanoate + (9Z)-octadecenoate + H(+). The catalysed reaction is 13-(9Z-octadecenoyloxy)-octadecanoate + H2O = 13-hydroxy-octadecanoate + (9Z)-octadecenoate + H(+). It catalyses the reaction 5-(9Z-octadecenoyloxy)-octadecanoate + H2O = 5-hydroxy-octadecanoate + (9Z)-octadecenoate + H(+). Its function is as follows. Hydrolyzes bioactive fatty-acid esters of hydroxy-fatty acids (FAHFAs), but not other major classes of lipids. Shows a preference for FAHFAs with branching distal from the carboxylate head group of the lipids. Regulates the expression and the cell-associated anticoagulant activity of the inhibitor TFPI in endothelial cells (in vitro). In Rattus norvegicus (Rat), this protein is Androgen-dependent TFPI-regulating protein (Adtrp).